Reading from the N-terminus, the 146-residue chain is Ribosome maturation factor RimP (146 aa).

It belongs to the RimP family.

It is found in the cytoplasm. Functionally, required for maturation of 30S ribosomal subunits. The polypeptide is Ribosome maturation factor RimP (Helicobacter pylori (strain J99 / ATCC 700824) (Campylobacter pylori J99)).